The primary structure comprises 66 residues: Large ribosomal subunit protein bL35 (66 aa).

The protein belongs to the bacterial ribosomal protein bL35 family.

The polypeptide is Large ribosomal subunit protein bL35 (Afipia carboxidovorans (strain ATCC 49405 / DSM 1227 / KCTC 32145 / OM5) (Oligotropha carboxidovorans)).